A 1328-amino-acid chain; its full sequence is 5'-3' exoribonuclease 1 (1328 aa).

Residues 1211–1328 (AGKNRKTNVS…VQPMGKLQIN (118 aa)) are disordered. Residues 1217–1231 (TNVSANNVSQGTDSR) are compositionally biased toward polar residues. Residues 1275–1286 (HKSKSKFSKGNH) show a composition bias toward basic residues.

This sequence belongs to the 5'-3' exonuclease family. Monomer. Requires Mg(2+) as cofactor.

It localises to the cytoplasm. The protein localises to the perinuclear region. It is found in the P-body. With respect to regulation, strand exchange activity is enhanced by fatty acid synthase (stimulatory factor P190/210). Multifunctional protein that exhibits several independent functions at different levels of the cellular processes. 5'-3' exonuclease component of the nonsense-mediated mRNA decay (NMD) which is a highly conserved mRNA degradation pathway, an RNA surveillance system whose role is to identify and rid cells of mRNA with premature termination codons and thus prevents accumulation of potentially harmful truncated proteins. Involved in the degradation of several hypomodified mature tRNA species and participates in the 5'-processing or the degradation of the snoRNA precursors and rRNA processing. This is 5'-3' exoribonuclease 1 (exo2) from Schizosaccharomyces pombe (strain 972 / ATCC 24843) (Fission yeast).